The primary structure comprises 266 residues: UPF0354 protein LMHCC_0955 (266 aa).

The protein belongs to the UPF0354 family.

This is UPF0354 protein LMHCC_0955 from Listeria monocytogenes serotype 4a (strain HCC23).